A 107-amino-acid polypeptide reads, in one-letter code: Nucleoid-associated protein Pnuc_0701 (107 aa).

Belongs to the YbaB/EbfC family. In terms of assembly, homodimer.

The protein localises to the cytoplasm. It localises to the nucleoid. Functionally, binds to DNA and alters its conformation. May be involved in regulation of gene expression, nucleoid organization and DNA protection. This Polynucleobacter asymbioticus (strain DSM 18221 / CIP 109841 / QLW-P1DMWA-1) (Polynucleobacter necessarius subsp. asymbioticus) protein is Nucleoid-associated protein Pnuc_0701.